A 366-amino-acid chain; its full sequence is Putative F-box protein At3g13624 (366 aa).

Positions 1–51 (MTTISDLPEDVVEEILPRVPLTSLSAVRSICKTWNTLSKNRVLCKAAVKKQ) constitute an F-box domain.

The polypeptide is Putative F-box protein At3g13624 (Arabidopsis thaliana (Mouse-ear cress)).